The primary structure comprises 409 residues: Glucan endo-1,6-beta-glucosidase B (409 aa).

The N-terminal stretch at 1-16 (MKFILPLFTSLPVALA) is a signal peptide. The N-linked (GlcNAc...) asparagine glycan is linked to Asn-35. The Proton donor role is filled by Glu-228. Glu-330 serves as the catalytic Nucleophile.

It belongs to the glycosyl hydrolase 5 (cellulase A) family.

It localises to the secreted. The catalysed reaction is Random hydrolysis of (1-&gt;6)-linkages in (1-&gt;6)-beta-D-glucans.. Beta-glucanases participate in the metabolism of beta-glucan, the main structural component of the cell wall. Acts on lutean, pustulan and 1,6-oligo-beta-D-glucosides. In Emericella nidulans (strain FGSC A4 / ATCC 38163 / CBS 112.46 / NRRL 194 / M139) (Aspergillus nidulans), this protein is Glucan endo-1,6-beta-glucosidase B (exgB).